The following is a 142-amino-acid chain: Cellulose/chitin binding protein BQ2027_MB2009 (142 aa).

The signal sequence occupies residues 1 to 37 (MAGLNIYVRRWRTALHATVSALIVAILGLAITPVASA). The 105-residue stretch at 38-142 (ATARATLSVT…CLLNGQYPCT (105 aa)) folds into the CBM2 domain.

Its subcellular location is the secreted. The protein resides in the cell wall. It localises to the cell membrane. Its function is as follows. Carbohydrate binding protein that binds chitin and cellulose. Lacks enzymatic activity and does not hydrolyze chitin and cellulose. May interact with mycobacterial biofilms, which are rich in cellulose, and play a role in biofilm formation. Could also act as an adhesin, improving the initial attachment to host cells and aiding M.bovis during the initial stages of infection. Functionally, may act as a virulence factor that modulates host immune responses and contributes to host immune evasion. In Mycobacterium bovis (strain ATCC BAA-935 / AF2122/97), this protein is Cellulose/chitin binding protein BQ2027_MB2009.